Consider the following 129-residue polypeptide: Azurin-1 (129 aa).

The region spanning 1–129 (AECSVDIAGN…LMKGVLKLVD (129 aa)) is the Plastocyanin-like domain. A disulfide bond links Cys-3 and Cys-26. Positions 46, 112, 117, and 121 each coordinate Cu cation.

It is found in the periplasm. Its function is as follows. Transfers electrons from cytochrome c551 to cytochrome oxidase. The polypeptide is Azurin-1 (Alcaligenes xylosoxydans xylosoxydans (Achromobacter xylosoxidans)).